A 136-amino-acid polypeptide reads, in one-letter code: UPF0225 protein Mpe_A2093 (136 aa).

Belongs to the UPF0225 family.

This is UPF0225 protein Mpe_A2093 from Methylibium petroleiphilum (strain ATCC BAA-1232 / LMG 22953 / PM1).